A 279-amino-acid polypeptide reads, in one-letter code: 3-methyl-2-oxobutanoate hydroxymethyltransferase (279 aa).

The Mg(2+) site is built by D44 and D83. 3-methyl-2-oxobutanoate-binding positions include 44–45 (DS), D83, and K113. E115 contributes to the Mg(2+) binding site. E182 serves as the catalytic Proton acceptor.

This sequence belongs to the PanB family. As to quaternary structure, homodecamer; pentamer of dimers. It depends on Mg(2+) as a cofactor.

Its subcellular location is the cytoplasm. The enzyme catalyses 3-methyl-2-oxobutanoate + (6R)-5,10-methylene-5,6,7,8-tetrahydrofolate + H2O = 2-dehydropantoate + (6S)-5,6,7,8-tetrahydrofolate. Its pathway is cofactor biosynthesis; (R)-pantothenate biosynthesis; (R)-pantoate from 3-methyl-2-oxobutanoate: step 1/2. Functionally, catalyzes the reversible reaction in which hydroxymethyl group from 5,10-methylenetetrahydrofolate is transferred onto alpha-ketoisovalerate to form ketopantoate. This is 3-methyl-2-oxobutanoate hydroxymethyltransferase from Desulfotalea psychrophila (strain LSv54 / DSM 12343).